Reading from the N-terminus, the 447-residue chain is MNAWEVNFDGLVGLTHHYAGLSFGNEASTRHRFQVSNPRLAAKQGLLKMKTLADAGFPQAVIPPHERPFIPVLRQLGFSGSDEQVLEKVARQAPHWLSSVSSASPMWVANAATIAPSADTLDGKVHLTVANLNNKFHRSLEAPVTESLLKAIFNDEEKFSVHSALPQVALLGDEGAANHNRLGGHYGEPGMQLFVYGREEGNDTRPSRYPARQTREASEAVARLNQVNPQQVIFAQQNPDVIDQGVFHNDVIAVSNRQVLFCHQQAFARQSQLLANLRARVNGFMAIEVPATQVSVSDAVSTYLFNSQLLSRDDGSMMLVLPQECREHAGVWGYLNELLAADNPISELKVFDLRESMANGGGPACLRLRVVLTEEERRAVNPAVMMNDTLFNALNDWVDRYYRDRLTAADLADPQLLREGREALDVLSQLLNLGSVYPFQREGGGNG.

Substrate is bound by residues 19–28 (AGLSFGNEAS), asparagine 110, and 137–138 (HR). Residue glutamate 174 is part of the active site. Arginine 212 contacts substrate. Histidine 248 is a catalytic residue. Substrate is bound by residues aspartate 250 and asparagine 359. The Nucleophile role is filled by cysteine 365.

It belongs to the succinylarginine dihydrolase family. In terms of assembly, homodimer.

It catalyses the reaction N(2)-succinyl-L-arginine + 2 H2O + 2 H(+) = N(2)-succinyl-L-ornithine + 2 NH4(+) + CO2. The protein operates within amino-acid degradation; L-arginine degradation via AST pathway; L-glutamate and succinate from L-arginine: step 2/5. Its function is as follows. Catalyzes the hydrolysis of N(2)-succinylarginine into N(2)-succinylornithine, ammonia and CO(2). This is N-succinylarginine dihydrolase from Shigella boydii serotype 4 (strain Sb227).